A 222-amino-acid polypeptide reads, in one-letter code: C-8 sterol isomerase ERG2 (222 aa).

The chain crosses the membrane as a helical span at residues 3–23 (FFPLLLLIGVVGYIMNVLFTT).

It belongs to the ERG2 family.

Its subcellular location is the endoplasmic reticulum membrane. The catalysed reaction is fecosterol = episterol. Its pathway is steroid metabolism; ergosterol biosynthesis; ergosterol from zymosterol: step 2/5. Catalytic activity is inhibited by the morphilines tridemorph, fenpropimorph, and fenpropidin. C-8 sterol isomerase; part of the third module of ergosterol biosynthesis pathway that includes the late steps of the pathway. ERG2 catalyzes the reaction which results in unsaturation at C-7 in the B ring of sterols and thus converts fecosterol to episterol. The third module or late pathway involves the ergosterol synthesis itself through consecutive reactions that mainly occur in the endoplasmic reticulum (ER) membrane. Firstly, the squalene synthase ERG9 catalyzes the condensation of 2 farnesyl pyrophosphate moieties to form squalene, which is the precursor of all steroids. Squalene synthase is crucial for balancing the incorporation of farnesyl diphosphate (FPP) into sterol and nonsterol isoprene synthesis. Secondly, the squalene epoxidase ERG1 catalyzes the stereospecific oxidation of squalene to (S)-2,3-epoxysqualene, which is considered to be a rate-limiting enzyme in steroid biosynthesis. Then, the lanosterol synthase ERG7 catalyzes the cyclization of (S)-2,3 oxidosqualene to lanosterol, a reaction that forms the sterol core. In the next steps, lanosterol is transformed to zymosterol through a complex process involving various demethylation, reduction and desaturation reactions. The lanosterol 14-alpha-demethylase ERG11 (also known as CYP51) catalyzes C14-demethylation of lanosterol to produce 4,4'-dimethyl cholesta-8,14,24-triene-3-beta-ol, which is critical for ergosterol biosynthesis. The C-14 reductase ERG24 reduces the C14=C15 double bond of 4,4-dimethyl-cholesta-8,14,24-trienol to produce 4,4-dimethyl-cholesta-8,24-dienol. 4,4-dimethyl-cholesta-8,24-dienol is substrate of the C-4 demethylation complex ERG25-ERG26-ERG27 in which ERG25 catalyzes the three-step monooxygenation required for the demethylation of 4,4-dimethyl and 4alpha-methylsterols, ERG26 catalyzes the oxidative decarboxylation that results in a reduction of the 3-beta-hydroxy group at the C-3 carbon to an oxo group, and ERG27 is responsible for the reduction of the keto group on the C-3. ERG28 has a role as a scaffold to help anchor ERG25, ERG26 and ERG27 to the endoplasmic reticulum and ERG29 regulates the activity of the iron-containing C4-methylsterol oxidase ERG25. Then, the sterol 24-C-methyltransferase ERG6 catalyzes the methyl transfer from S-adenosyl-methionine to the C-24 of zymosterol to form fecosterol. The C-8 sterol isomerase ERG2 catalyzes the reaction which results in unsaturation at C-7 in the B ring of sterols and thus converts fecosterol to episterol. The sterol-C5-desaturase ERG3 then catalyzes the introduction of a C-5 double bond in the B ring to produce 5-dehydroepisterol. The C-22 sterol desaturase ERG5 further converts 5-dehydroepisterol into ergosta-5,7,22,24(28)-tetraen-3beta-ol by forming the C-22(23) double bond in the sterol side chain. Finally, ergosta-5,7,22,24(28)-tetraen-3beta-ol is substrate of the C-24(28) sterol reductase ERG4 to produce ergosterol. The protein is C-8 sterol isomerase ERG2 of Saccharomyces cerevisiae (strain ATCC 204508 / S288c) (Baker's yeast).